The sequence spans 286 residues: Transcription factor egl-46 (286 aa).

The C2H2-type 1; atypical zinc finger occupies 180–200 (CICRLCKVKYEDVFKLAQHKC). 2 consecutive C2H2-type zinc fingers follow at residues 208–230 (YKCP…RRWH) and 248–271 (VSCS…STCQ).

Belongs to the INSM1 family. As to quaternary structure, interacts (via C-terminus) with egl-44 (via N-terminus); the interaction is direct; the interaction may regulate transcription. As to expression, expressed in touch cells, HSN cells, ventral cord motor neurons and ciliated ray neurons.

Its subcellular location is the nucleus. In terms of biological role, transcription factor. Represses expression of genes involved in differentiation of touch receptor neurons (TRN), probably acting as a heterodimer with egl-44, perhaps by occupying similar cis-regulatory elements as an unc-86/mec-3 heterodimer. Plays a role in cell fate specification of neurons, including the hook neuron HOB, the gas-sensing neuron BAG and touch receptor neurons. Plays a role in neuron differentiation by repressing the expression of zag-1 in FLP neurons, probably acting as a heterodimer with egl-44; because zag-1 represses expression of egl-46 and egl-44, together these proteins form a bistable, negative-feedback loop that regulates the choice between neuronal fates. Acts downstream of egl-44 to prevent touch cell differentiation in FLP neurons. Involved in male mating behavior, acting in concert with egl-44, via modulation of expression of polycystins lov-1 and pkd-2, homeodomain protein ceh-26, and neuropeptide-like protein nlp-8. Modulates the expression of a subset of terminal differentiation genes involved in O(2)- and CO(2)-sensing, acting in parallel to ets-5 and egl-13. May act upstream of RFX transcription factor daf-19 to regulate gene expression specifically in the HOB neuron. Plays a role in specifying commissural dendrites of the PVD nociceptive neurons, acting in concert with egl-44. In association with egl-44, regulates cell cycle exit in the neuronal Q cell lineage. The sequence is that of Transcription factor egl-46 from Caenorhabditis elegans.